The primary structure comprises 419 residues: L-rhamnose isomerase (419 aa).

Mn(2+) contacts are provided by His-262, Asp-294, and Asp-296.

The protein belongs to the rhamnose isomerase family. In terms of assembly, homotetramer. Requires Mn(2+) as cofactor.

Its subcellular location is the cytoplasm. It carries out the reaction L-rhamnopyranose = L-rhamnulose. The protein operates within carbohydrate degradation; L-rhamnose degradation; glycerone phosphate from L-rhamnose: step 1/3. Its function is as follows. Catalyzes the interconversion of L-rhamnose and L-rhamnulose. In Escherichia coli O81 (strain ED1a), this protein is L-rhamnose isomerase.